The sequence spans 1244 residues: Ras-specific guanine nucleotide-releasing factor 1 (1244 aa).

The region spanning 22-129 (DGTRKGYLSK…WVAAIARASY (108 aa)) is the PH 1 domain. Serine 71 carries the phosphoserine; by PLK2 modification. The IQ domain occupies 204-229 (KKIKKVQSFLRGWLCRRKWKNIIQDY). Positions 240 to 426 (KRNQVVFSML…EELSRVMHDE (187 aa)) constitute a DH domain. The region spanning 456 to 582 (TFVRQGSLIQ…WTSDIIQCVD (127 aa)) is the PH 2 domain. A phosphoserine; by PLK2 mark is found at serine 575 and serine 611. An N-terminal Ras-GEF domain is found at 629-743 (KVLQIRYASV…RRRKLSLNIP (115 aa)). The segment at 707–730 (GDAPKSPRASRKFSSPPPLAIGTS) is disordered. The residue at position 739 (serine 739) is a Phosphoserine. Phosphoserine; by PLK2 occurs at positions 760 and 781. The tract at residues 800 to 840 (TLEESSGFRKPTSDILKEESDDDQSDVDDTEVSPPTPKSFR) is disordered. Residues 818 to 830 (ESDDDQSDVDDTE) show a composition bias toward acidic residues. Position 854 is a phosphoserine; by PLK2 (serine 854). Residues 1009-1241 (SAMEIAEQLT…YEASLRIEPK (233 aa)) enclose the Ras-GEF domain.

As to quaternary structure, homooligomer and heterooligomer with RASGRF2. Interacts with USP8, thereby regulating its stability. In terms of processing, phosphorylated by PLK2, leading to ubiquitination and degradation by the proteasome. Post-translationally, ubiquitinated and degraded following phosphorylation by PLK2. Phosphorylated by SRC and LCK. Phosphorylation by LCK increases its capacity to stimulate the GDP/GTP exchange on Ras, whereas its phosphorylation by SRC seems not to have an effect on stimulation activity.

Functionally, promotes the exchange of Ras-bound GDP by GTP. This is Ras-specific guanine nucleotide-releasing factor 1 (Rasgrf1) from Rattus norvegicus (Rat).